Reading from the N-terminus, the 141-residue chain is Sec-independent protein translocase protein TatB (141 aa).

Residues 2–22 (FANVGWGEMLVLVIAGLVILG) form a helical membrane-spanning segment. The disordered stretch occupies residues 92-141 (IFTGRFDSTSSDQPGSGKPPKPQSGPGPAAASGPAATTTPASTPFDPDAT). Over residues 117-141 (PGPAAASGPAATTTPASTPFDPDAT) the composition is skewed to low complexity.

The protein belongs to the TatB family. The Tat system comprises two distinct complexes: a TatABC complex, containing multiple copies of TatA, TatB and TatC subunits, and a separate TatA complex, containing only TatA subunits. Substrates initially bind to the TatABC complex, which probably triggers association of the separate TatA complex to form the active translocon.

The protein resides in the cell membrane. In terms of biological role, part of the twin-arginine translocation (Tat) system that transports large folded proteins containing a characteristic twin-arginine motif in their signal peptide across membranes. Together with TatC, TatB is part of a receptor directly interacting with Tat signal peptides. TatB may form an oligomeric binding site that transiently accommodates folded Tat precursor proteins before their translocation. The polypeptide is Sec-independent protein translocase protein TatB (Mycolicibacterium gilvum (strain PYR-GCK) (Mycobacterium gilvum (strain PYR-GCK))).